Reading from the N-terminus, the 70-residue chain is Metallothionein-like protein 1 (70 aa).

Belongs to the metallothionein superfamily. Type 15 family.

In terms of biological role, metallothioneins have a high content of cysteine residues that bind various heavy metals. This is Metallothionein-like protein 1 (MT1) from Festuca rubra (Red fescue).